We begin with the raw amino-acid sequence, 165 residues long: Growth arrest and DNA damage-inducible protein GADD45 alpha (165 aa).

Thr-2 is subject to Phosphothreonine.

Belongs to the GADD45 family. In terms of assembly, interacts with AURKA, PCNA, GADD45GIP1 and MAPK14.

It is found in the nucleus. In terms of biological role, might affect PCNA interaction with some CDK (cell division protein kinase) complexes; stimulates DNA excision repair in vitro and inhibits entry of cells into S phase. In T-cells, functions as a regulator of p38 MAPKs by inhibiting p88 phosphorylation and activity. The chain is Growth arrest and DNA damage-inducible protein GADD45 alpha (GADD45A) from Cricetulus griseus (Chinese hamster).